The following is a 416-amino-acid chain: Serine hydroxymethyltransferase (416 aa).

Residues leucine 118 and 122-124 each bind (6S)-5,6,7,8-tetrahydrofolate; that span reads GHL. Position 226 is an N6-(pyridoxal phosphate)lysine (lysine 226). Residues glutamate 242 and 350–352 each bind (6S)-5,6,7,8-tetrahydrofolate; that span reads SPF.

It belongs to the SHMT family. In terms of assembly, homodimer. The cofactor is pyridoxal 5'-phosphate.

The protein localises to the cytoplasm. It carries out the reaction (6R)-5,10-methylene-5,6,7,8-tetrahydrofolate + glycine + H2O = (6S)-5,6,7,8-tetrahydrofolate + L-serine. The protein operates within one-carbon metabolism; tetrahydrofolate interconversion. Its pathway is amino-acid biosynthesis; glycine biosynthesis; glycine from L-serine: step 1/1. Catalyzes the reversible interconversion of serine and glycine with tetrahydrofolate (THF) serving as the one-carbon carrier. This reaction serves as the major source of one-carbon groups required for the biosynthesis of purines, thymidylate, methionine, and other important biomolecules. Also exhibits THF-independent aldolase activity toward beta-hydroxyamino acids, producing glycine and aldehydes, via a retro-aldol mechanism. The chain is Serine hydroxymethyltransferase from Helicobacter pylori (strain ATCC 700392 / 26695) (Campylobacter pylori).